The primary structure comprises 346 residues: Putative D-xylulose reductase (346 aa).

Cys39, His64, and Glu150 together coordinate Zn(2+).

The protein belongs to the zinc-containing alcohol dehydrogenase family. Zn(2+) is required as a cofactor.

It catalyses the reaction xylitol + NAD(+) = D-xylulose + NADH + H(+). The polypeptide is Putative D-xylulose reductase (Rhizobium meliloti (strain 1021) (Ensifer meliloti)).